Reading from the N-terminus, the 919-residue chain is Translation initiation factor IF-2 (919 aa).

Over residues 93–107 (MGKALPEEVPEKIAP) the composition is skewed to basic and acidic residues. Disordered regions lie at residues 93–145 (MGKA…PAEP) and 158–279 (KIQP…RKGE). The segment covering 136–145 (LAPPEKPAEP) has biased composition (pro residues). Positions 158 to 171 (KIQPPEKFAEEPLK) are enriched in basic and acidic residues. A compositionally biased stretch (low complexity) spans 172–193 (KPAVIEPEKAAAAPKAVPGEAK). Basic and acidic residues-rich tracts occupy residues 194-203 (PLPRTERVQE) and 256-279 (GAPKTEAEKPRKKIKLPDETRKGE). Residues 420 to 589 (PRAPVVTIMG…LLQADVLELK (170 aa)) form the tr-type G domain. The segment at 429 to 436 (GHVDHGKT) is G1. A GTP-binding site is contributed by 429 to 436 (GHVDHGKT). The interval 454–458 (GITQA) is G2. Residues 475–478 (DTPG) are G3. GTP contacts are provided by residues 475–479 (DTPGH) and 529–532 (NKID). The segment at 529-532 (NKID) is G4. The G5 stretch occupies residues 565–567 (SAK).

This sequence belongs to the TRAFAC class translation factor GTPase superfamily. Classic translation factor GTPase family. IF-2 subfamily.

It is found in the cytoplasm. Functionally, one of the essential components for the initiation of protein synthesis. Protects formylmethionyl-tRNA from spontaneous hydrolysis and promotes its binding to the 30S ribosomal subunits. Also involved in the hydrolysis of GTP during the formation of the 70S ribosomal complex. In Syntrophus aciditrophicus (strain SB), this protein is Translation initiation factor IF-2.